The following is a 151-amino-acid chain: ALK and LTK ligand 2 (151 aa).

The first 25 residues, 1 to 25 (MRVSGRPMLLALLLLLSTVGDRGRA), serve as a signal peptide directing secretion. Disulfide bonds link Cys-112–Cys-148 and Cys-126–Cys-135.

Belongs to the ALKAL family. In terms of assembly, homodimer.

It is found in the secreted. The protein resides in the cell membrane. Its function is as follows. Cytokine that acts as a physiological ligand for receptor tyrosine kinases LTK and ALK, leading to their activation. Cytokine-binding is sufficient to activate LTK. In contrast, ALKAL2-driven activation of ALK is coupled with heparin-binding to ALK. Stimulation of ALK signaling is involved in neural development and regulation of energy expenditure. In Mus musculus (Mouse), this protein is ALK and LTK ligand 2.